The sequence spans 434 residues: Glutamyl-tRNA reductase (434 aa).

Substrate-binding positions include 54 to 57 (TCNR), serine 113, 118 to 120 (EAQ), and glutamine 124. The active-site Nucleophile is cysteine 55. 193–198 (GGGEVS) is a binding site for NADP(+).

The protein belongs to the glutamyl-tRNA reductase family. As to quaternary structure, homodimer.

The catalysed reaction is (S)-4-amino-5-oxopentanoate + tRNA(Glu) + NADP(+) = L-glutamyl-tRNA(Glu) + NADPH + H(+). It functions in the pathway porphyrin-containing compound metabolism; protoporphyrin-IX biosynthesis; 5-aminolevulinate from L-glutamyl-tRNA(Glu): step 1/2. It participates in porphyrin-containing compound metabolism; chlorophyll biosynthesis. In terms of biological role, catalyzes the NADPH-dependent reduction of glutamyl-tRNA(Glu) to glutamate 1-semialdehyde (GSA). The protein is Glutamyl-tRNA reductase of Chloroflexus aurantiacus (strain ATCC 29366 / DSM 635 / J-10-fl).